Here is a 326-residue protein sequence, read N- to C-terminus: rRNA 2'-O-methyltransferase fibrillarin (326 aa).

Residues Met-1 to Gly-84 are disordered. A compositionally biased stretch (gly residues) spans Ser-7–Gly-83. Asymmetric dimethylarginine occurs at positions 8, 11, 15, 19, 23, 26, 32, 36, 39, 45, 49, 55, 59, 63, 67, 71, 74, and 78. S-adenosyl-L-methionine is bound by residues Thr-180–Ser-181, Glu-199–Phe-200, Asp-224–Ala-225, and Asp-244–Gln-247.

Belongs to the methyltransferase superfamily. Fibrillarin family. Component of box C/D small nucleolar ribonucleoprotein (snoRNP) particles that contain SNU13, NOP1, SIK1/NOP56 and NOP58, plus a guide RNA. Post-translationally, by homology to other fibrillarins, some or all of the N-terminal domain arginines are modified to asymmetric dimethylarginine (DMA).

It localises to the nucleus. The protein localises to the nucleolus. The catalysed reaction is L-glutaminyl-[histone H2A] + S-adenosyl-L-methionine = N(5)-methyl-L-glutaminyl-[histone H2A] + S-adenosyl-L-homocysteine + H(+). Functionally, S-adenosyl-L-methionine-dependent methyltransferase that has the ability to methylate both RNAs and proteins. Involved in pre-rRNA processing. Utilizes the methyl donor S-adenosyl-L-methionine to catalyze the site-specific 2'-hydroxyl methylation of ribose moieties in pre-ribosomal RNA. Site specificity is provided by a guide RNA that base pairs with the substrate. Methylation occurs at a characteristic distance from the sequence involved in base pairing with the guide RNA. Also acts as a protein methyltransferase by mediating methylation of 'Gln-105' of histone H2A (H2AQ105me), a modification that impairs binding of the FACT complex and is specifically present at 35S ribosomal DNA locus. The polypeptide is rRNA 2'-O-methyltransferase fibrillarin (NOP1) (Eremothecium gossypii (strain ATCC 10895 / CBS 109.51 / FGSC 9923 / NRRL Y-1056) (Yeast)).